Consider the following 488-residue polypeptide: 3-octaprenyl-4-hydroxybenzoate carboxy-lyase (488 aa).

Mn(2+) is bound at residue Asn172. Residues 175-177 (IYR), 189-191 (RWL), and 194-195 (RG) contribute to the prenylated FMN site. Glu238 contacts Mn(2+). Asp287 functions as the Proton donor in the catalytic mechanism.

Belongs to the UbiD family. In terms of assembly, homohexamer. Requires prenylated FMN as cofactor. It depends on Mn(2+) as a cofactor.

The protein resides in the cell membrane. The enzyme catalyses a 4-hydroxy-3-(all-trans-polyprenyl)benzoate + H(+) = a 2-(all-trans-polyprenyl)phenol + CO2. The protein operates within cofactor biosynthesis; ubiquinone biosynthesis. In terms of biological role, catalyzes the decarboxylation of 3-octaprenyl-4-hydroxy benzoate to 2-octaprenylphenol, an intermediate step in ubiquinone biosynthesis. The polypeptide is 3-octaprenyl-4-hydroxybenzoate carboxy-lyase (Pseudomonas paraeruginosa (strain DSM 24068 / PA7) (Pseudomonas aeruginosa (strain PA7))).